Here is a 411-residue protein sequence, read N- to C-terminus: Tyrosine--tRNA ligase (411 aa).

Residue tyrosine 36 participates in L-tyrosine binding. The 'HIGH' region signature appears at 41–50; the sequence is PTADSLHVGH. The L-tyrosine site is built by tyrosine 172 and glutamine 176. The 'KMSKS' region motif lies at 232 to 236; sequence KMGKT. Position 235 (lysine 235) interacts with ATP. In terms of domain architecture, S4 RNA-binding spans 344–409; the sequence is YSIANILVVT…GKKNHIKVII (66 aa).

Belongs to the class-I aminoacyl-tRNA synthetase family. TyrS type 1 subfamily. As to quaternary structure, homodimer.

The protein resides in the cytoplasm. The enzyme catalyses tRNA(Tyr) + L-tyrosine + ATP = L-tyrosyl-tRNA(Tyr) + AMP + diphosphate + H(+). Functionally, catalyzes the attachment of tyrosine to tRNA(Tyr) in a two-step reaction: tyrosine is first activated by ATP to form Tyr-AMP and then transferred to the acceptor end of tRNA(Tyr). This Malacoplasma penetrans (strain HF-2) (Mycoplasma penetrans) protein is Tyrosine--tRNA ligase.